The sequence spans 239 residues: 1-(5-phosphoribosyl)-5-[(5-phosphoribosylamino)methylideneamino] imidazole-4-carboxamide isomerase (239 aa).

D8 serves as the catalytic Proton acceptor. Residue D129 is the Proton donor of the active site.

Belongs to the HisA/HisF family.

It localises to the cytoplasm. The enzyme catalyses 1-(5-phospho-beta-D-ribosyl)-5-[(5-phospho-beta-D-ribosylamino)methylideneamino]imidazole-4-carboxamide = 5-[(5-phospho-1-deoxy-D-ribulos-1-ylimino)methylamino]-1-(5-phospho-beta-D-ribosyl)imidazole-4-carboxamide. The protein operates within amino-acid biosynthesis; L-histidine biosynthesis; L-histidine from 5-phospho-alpha-D-ribose 1-diphosphate: step 4/9. The chain is 1-(5-phosphoribosyl)-5-[(5-phosphoribosylamino)methylideneamino] imidazole-4-carboxamide isomerase from Pelagibacter ubique (strain HTCC1062).